A 391-amino-acid chain; its full sequence is Multidrug resistance protein MdtL (391 aa).

12 consecutive transmembrane segments (helical) span residues 4-24, 42-62, 69-89, 93-113, 134-154, 158-178, 203-222, 245-265, 269-289, 293-313, 331-351, and 356-376; these read FLIC…MYLV, IAFS…GKVA, PVAI…SLAE, LFLA…VVAF, GITC…MLNF, SLFW…LFIL, FFLS…LTFV, ALTA…LGIF, TLMI…AVSP, VSLF…GVAM, LGIA…VVGI, and MLIG…MFVA.

Belongs to the major facilitator superfamily. DHA1 family. MdtL (TC 2.A.1.2.22) subfamily.

It localises to the cell inner membrane. Confers resistance to chloramphenicol. The sequence is that of Multidrug resistance protein MdtL from Escherichia coli O81 (strain ED1a).